A 197-amino-acid chain; its full sequence is Cytochrome c biogenesis ATP-binding export protein CcmA (197 aa).

One can recognise an ABC transporter domain in the interval 1 to 196; it reads MSMLSLHQLQ…VIKSAQILQL (196 aa). 35–42 is a binding site for ATP; sequence GANGSGKS.

The protein belongs to the ABC transporter superfamily. CcmA exporter (TC 3.A.1.107) family. In terms of assembly, the complex is composed of two ATP-binding proteins (CcmA) and two transmembrane proteins (CcmB).

The protein localises to the cell inner membrane. It carries out the reaction heme b(in) + ATP + H2O = heme b(out) + ADP + phosphate + H(+). Functionally, part of the ABC transporter complex CcmAB involved in the biogenesis of c-type cytochromes; once thought to export heme, this seems not to be the case, but its exact role is uncertain. Responsible for energy coupling to the transport system. This Rickettsia typhi (strain ATCC VR-144 / Wilmington) protein is Cytochrome c biogenesis ATP-binding export protein CcmA.